Consider the following 227-residue polypeptide: Lipoprotein-releasing system ATP-binding protein LolD (227 aa).

Residues 6–227 form the ABC transporter domain; sequence LKCENINKFY…MQDGLLKEGA (222 aa). An ATP-binding site is contributed by 42–49; that stretch reads GSSGSGKS.

The protein belongs to the ABC transporter superfamily. Lipoprotein translocase (TC 3.A.1.125) family. The complex is composed of two ATP-binding proteins (LolD) and two transmembrane proteins (LolC and LolE).

It localises to the cell inner membrane. In terms of biological role, part of the ABC transporter complex LolCDE involved in the translocation of mature outer membrane-directed lipoproteins, from the inner membrane to the periplasmic chaperone, LolA. Responsible for the formation of the LolA-lipoprotein complex in an ATP-dependent manner. The sequence is that of Lipoprotein-releasing system ATP-binding protein LolD from Haemophilus influenzae (strain 86-028NP).